A 369-amino-acid polypeptide reads, in one-letter code: Ribonuclease D (369 aa).

The 3'-5' exonuclease domain occupies 1–166; the sequence is MITTNDALAA…PIAHKLMEQV (166 aa). Residues 206 to 285 enclose the HRDC domain; the sequence is RPRQLACLKL…AQAQALLEDA (80 aa).

This sequence belongs to the RNase D family. It depends on a divalent metal cation as a cofactor.

It is found in the cytoplasm. It catalyses the reaction Exonucleolytic cleavage that removes extra residues from the 3'-terminus of tRNA to produce 5'-mononucleotides.. Functionally, exonuclease involved in the 3' processing of various precursor tRNAs. Initiates hydrolysis at the 3'-terminus of an RNA molecule and releases 5'-mononucleotides. The polypeptide is Ribonuclease D (Cronobacter turicensis (strain DSM 18703 / CCUG 55852 / LMG 23827 / z3032)).